The sequence spans 356 residues: UDP-N-acetylglucosamine--N-acetylmuramyl-(pentapeptide) pyrophosphoryl-undecaprenol N-acetylglucosamine transferase (356 aa).

UDP-N-acetyl-alpha-D-glucosamine-binding positions include 13 to 15 (TGG), Asn-125, Arg-161, Ser-189, Ile-243, and Gln-288.

This sequence belongs to the glycosyltransferase 28 family. MurG subfamily.

The protein resides in the cell inner membrane. It carries out the reaction di-trans,octa-cis-undecaprenyl diphospho-N-acetyl-alpha-D-muramoyl-L-alanyl-D-glutamyl-meso-2,6-diaminopimeloyl-D-alanyl-D-alanine + UDP-N-acetyl-alpha-D-glucosamine = di-trans,octa-cis-undecaprenyl diphospho-[N-acetyl-alpha-D-glucosaminyl-(1-&gt;4)]-N-acetyl-alpha-D-muramoyl-L-alanyl-D-glutamyl-meso-2,6-diaminopimeloyl-D-alanyl-D-alanine + UDP + H(+). It participates in cell wall biogenesis; peptidoglycan biosynthesis. In terms of biological role, cell wall formation. Catalyzes the transfer of a GlcNAc subunit on undecaprenyl-pyrophosphoryl-MurNAc-pentapeptide (lipid intermediate I) to form undecaprenyl-pyrophosphoryl-MurNAc-(pentapeptide)GlcNAc (lipid intermediate II). This Cupriavidus metallidurans (strain ATCC 43123 / DSM 2839 / NBRC 102507 / CH34) (Ralstonia metallidurans) protein is UDP-N-acetylglucosamine--N-acetylmuramyl-(pentapeptide) pyrophosphoryl-undecaprenol N-acetylglucosamine transferase.